The following is a 197-amino-acid chain: Beta-crystallin A2 (197 aa).

Positions 1–11 are N-terminal arm; the sequence is MSGTLSQGSSP. Beta/gamma crystallin 'Greek key' domains are found at residues 12-52 and 53-99; these read ARLT…KVES and GAWV…RPLL. The segment at 100–105 is connecting peptide; that stretch reads CANHSD. 2 consecutive Beta/gamma crystallin 'Greek key' domains span residues 106 to 147 and 148 to 196; these read SRVT…KVTS and GAWV…RRVQ.

The protein belongs to the beta/gamma-crystallin family. In terms of assembly, homo/heterodimer, or complexes of higher-order. The structure of beta-crystallin oligomers seems to be stabilized through interactions between the N-terminal arms.

In terms of biological role, crystallins are the dominant structural components of the vertebrate eye lens. The polypeptide is Beta-crystallin A2 (CRYBA2) (Macropus fuliginosus (Western gray kangaroo)).